The chain runs to 95 residues: Small ribosomal subunit protein bS20 (95 aa).

The segment at 1–22 is disordered; that stretch reads MANIKSQIKRNRTNENNRLRNK. The segment covering 12 to 22 has biased composition (basic and acidic residues); the sequence is RTNENNRLRNK.

Belongs to the bacterial ribosomal protein bS20 family.

Its function is as follows. Binds directly to 16S ribosomal RNA. The polypeptide is Small ribosomal subunit protein bS20 (Tropheryma whipplei (strain TW08/27) (Whipple's bacillus)).